Here is a 117-residue protein sequence, read N- to C-terminus: Large ribosomal subunit protein eL30B (117 aa).

The segment covering 1-14 (MSAAPTTAPVAAVS) has biased composition (low complexity). The interval 1–22 (MSAAPTTAPVAAVSKKGKKSGD) is disordered.

The protein belongs to the eukaryotic ribosomal protein eL30 family. In terms of assembly, component of the large ribosomal subunit (LSU). Mature yeast ribosomes consist of a small (40S) and a large (60S) subunit. The 40S small subunit contains 1 molecule of ribosomal RNA (18S rRNA) and at least 33 different proteins. The large 60S subunit contains 3 rRNA molecules (25S, 5.8S and 5S rRNA) and at least 46 different proteins.

It localises to the cytoplasm. Its function is as follows. Component of the ribosome, a large ribonucleoprotein complex responsible for the synthesis of proteins in the cell. The small ribosomal subunit (SSU) binds messenger RNAs (mRNAs) and translates the encoded message by selecting cognate aminoacyl-transfer RNA (tRNA) molecules. The large subunit (LSU) contains the ribosomal catalytic site termed the peptidyl transferase center (PTC), which catalyzes the formation of peptide bonds, thereby polymerizing the amino acids delivered by tRNAs into a polypeptide chain. The nascent polypeptides leave the ribosome through a tunnel in the LSU and interact with protein factors that function in enzymatic processing, targeting, and the membrane insertion of nascent chains at the exit of the ribosomal tunnel. The sequence is that of Large ribosomal subunit protein eL30B (rpl3002) from Schizosaccharomyces pombe (strain 972 / ATCC 24843) (Fission yeast).